A 349-amino-acid chain; its full sequence is tRNA N6-adenosine threonylcarbamoyltransferase (349 aa).

Residues His-116 and His-120 each coordinate Fe cation. Substrate-binding positions include 139–143, Asp-172, Gly-185, and Asn-283; that span reads LVSGG. Asp-311 provides a ligand contact to Fe cation.

It belongs to the KAE1 / TsaD family. The cofactor is Fe(2+).

The protein resides in the cytoplasm. It catalyses the reaction L-threonylcarbamoyladenylate + adenosine(37) in tRNA = N(6)-L-threonylcarbamoyladenosine(37) in tRNA + AMP + H(+). Its function is as follows. Required for the formation of a threonylcarbamoyl group on adenosine at position 37 (t(6)A37) in tRNAs that read codons beginning with adenine. Is involved in the transfer of the threonylcarbamoyl moiety of threonylcarbamoyl-AMP (TC-AMP) to the N6 group of A37, together with TsaE and TsaB. TsaD likely plays a direct catalytic role in this reaction. In Colwellia psychrerythraea (strain 34H / ATCC BAA-681) (Vibrio psychroerythus), this protein is tRNA N6-adenosine threonylcarbamoyltransferase.